The primary structure comprises 188 residues: Protein-L-isoaspartate O-methyltransferase (188 aa).

The active site involves Ser33.

This sequence belongs to the methyltransferase superfamily. L-isoaspartyl/D-aspartyl protein methyltransferase family.

It is found in the cytoplasm. The catalysed reaction is [protein]-L-isoaspartate + S-adenosyl-L-methionine = [protein]-L-isoaspartate alpha-methyl ester + S-adenosyl-L-homocysteine. Catalyzes the methyl esterification of L-isoaspartyl residues in peptides and proteins that result from spontaneous decomposition of normal L-aspartyl and L-asparaginyl residues. It plays a role in the repair and/or degradation of damaged proteins. The polypeptide is Protein-L-isoaspartate O-methyltransferase (Methanocella arvoryzae (strain DSM 22066 / NBRC 105507 / MRE50)).